The primary structure comprises 540 residues: Putative sel1-like repeat-containing protein R815 (540 aa).

Sel1-like repeat units lie at residues 129–164, 165–200, 201–236, 237–272, 273–308, and 309–344; these read IDAQ…YKEN, LFGL…KHNY, PAVK…NQGY, PLAQ…NNGC, LYAT…SENY, and LLAI…NSTK.

This is Putative sel1-like repeat-containing protein R815 from Acanthamoeba polyphaga (Amoeba).